Reading from the N-terminus, the 250-residue chain is Octanoyltransferase (250 aa).

Residues 49–230 (DEINDVILVL…ALDDAFAGRL (182 aa)) form the BPL/LPL catalytic domain. Substrate is bound by residues 87-94 (RGGRITWH), 160-162 (ALG), and 173-175 (GLA). Cys-191 functions as the Acyl-thioester intermediate in the catalytic mechanism.

The protein belongs to the LipB family.

It localises to the cytoplasm. The catalysed reaction is octanoyl-[ACP] + L-lysyl-[protein] = N(6)-octanoyl-L-lysyl-[protein] + holo-[ACP] + H(+). It participates in protein modification; protein lipoylation via endogenous pathway; protein N(6)-(lipoyl)lysine from octanoyl-[acyl-carrier-protein]: step 1/2. Catalyzes the transfer of endogenously produced octanoic acid from octanoyl-acyl-carrier-protein onto the lipoyl domains of lipoate-dependent enzymes. Lipoyl-ACP can also act as a substrate although octanoyl-ACP is likely to be the physiological substrate. This Corynebacterium diphtheriae (strain ATCC 700971 / NCTC 13129 / Biotype gravis) protein is Octanoyltransferase.